The following is a 560-amino-acid chain: Beta-glucosidase 26, peroxisomal (560 aa).

A beta-D-glucoside contacts are provided by residues Gln33, His137, 182–183, Tyr326, Glu398, Trp450, 457–458, and Tyr466; these read NE and EW. The active-site Proton donor is Glu183. Glu398 functions as the Nucleophile in the catalytic mechanism.

The protein belongs to the glycosyl hydrolase 1 family.

The protein resides in the peroxisome. The catalysed reaction is Hydrolysis of terminal, non-reducing beta-D-glucosyl residues with release of beta-D-glucose.. Functionally, possesses beta-glucosidase activity toward 4-methyl-umbelliferyl-beta-D-glucoside in vitro. Possesses myrosinase activity toward indol-3-yl-methylglucosinolate (I3M) and 4-methoxy-indol-3-yl-methylglucosinolate (4MO-I3M) in vivo. Component of an inducible preinvasion resistance mechanism that prevents penetration of the nonhost fungal species B.graminis and E.pisi. Involved in indole glucosinolate (IGS) activation during pattern-triggered immunity (PTI). Functions as a myrosinase for the breakdown of flg22-triggered IGS. Required for both callose deposition and glucosinolate activation during pathogen-triggered resistance. During fungal attack, required for IGS activation that mediates broad-spectrum antifungal defense. This is Beta-glucosidase 26, peroxisomal from Arabidopsis thaliana (Mouse-ear cress).